The primary structure comprises 707 residues: Ribosomal RNA large subunit methyltransferase K/L (707 aa).

The THUMP domain occupies 44–155 (VIYNLCLWSR…NDILTVSFDL (112 aa)).

It belongs to the methyltransferase superfamily. RlmKL family.

It is found in the cytoplasm. The catalysed reaction is guanosine(2445) in 23S rRNA + S-adenosyl-L-methionine = N(2)-methylguanosine(2445) in 23S rRNA + S-adenosyl-L-homocysteine + H(+). It catalyses the reaction guanosine(2069) in 23S rRNA + S-adenosyl-L-methionine = N(2)-methylguanosine(2069) in 23S rRNA + S-adenosyl-L-homocysteine + H(+). In terms of biological role, specifically methylates the guanine in position 2445 (m2G2445) and the guanine in position 2069 (m7G2069) of 23S rRNA. This Legionella pneumophila (strain Corby) protein is Ribosomal RNA large subunit methyltransferase K/L.